The chain runs to 305 residues: MIRALARGATIPRSFHYIQYYQKRNLLTHGLKKKHIPPYKTILALGAGAFISGLFMLQKDSITNDAGPIENSESSVEVDKSVSPFTVVLSPPETLLTTKYTLLGFGPRSVTFLGFKVYALGIYVANEDLPLIPKILNPTYLCKAFLDTDSAKSHSENVGAALKDATKSRVLVGSLIDGGVRFMAKITPIRNTDFNHLKDGLVKSILNHPECQKNQEAVSRGLQELKNAFTRKGSVPKNDDLIIELQANGSLQLSYRSRKQNECMMLGRVDEPLIGKFLFSQYLGGDKPLSPPTRETFAQKVKTLV.

The N-terminal 22 residues, 1-22, are a transit peptide targeting the mitochondrion; the sequence is MIRALARGATIPRSFHYIQYYQ.

Belongs to the AIM18/AIM46 family.

The protein resides in the mitochondrion. This Lachancea thermotolerans (strain ATCC 56472 / CBS 6340 / NRRL Y-8284) (Yeast) protein is Altered inheritance of mitochondria protein 18, mitochondrial (AIM18).